Reading from the N-terminus, the 193-residue chain is Protein hunchback (193 aa).

Disordered stretches follow at residues 16-126 and 146-193; these read SHHH…ATTT and SNDK…KYMA. Positions 17–31 are enriched in basic residues; it reads HHHHHHHAHHSHHQH. Low complexity-rich tracts occupy residues 35–46 and 56–77; these read SNSNSNASSPHQ and SSNN…QQQQ. Residues 89–99 show a composition bias toward polar residues; that stretch reads PSPSNNDQNSR. The span at 174–193 shows a compositional bias: basic and acidic residues; that stretch reads EPEKEHDLMSNSSEDMKYMA.

Belongs to the hunchback C2H2-type zinc-finger protein family.

The protein localises to the nucleus. In terms of biological role, gap class segmentation protein that controls development of head structures. The protein is Protein hunchback (hb) of Drosophila iki (Fruit fly).